Here is a 159-residue protein sequence, read N- to C-terminus: Transmembrane protein 88 (159 aa).

2 helical membrane passes run 43-63 (LLLL…MLGF) and 88-108 (FTAL…LALA). Residues 137–159 (PQPRQIRASPGSQAVPTSGKVWV) form a disordered region.

The protein belongs to the TMEM88 family. Interacts (via C-terminus) with DVL1.

The protein resides in the cell membrane. Functionally, inhibits the Wnt/beta-catenin signaling pathway. Crucial for heart development and acts downstream of GATA factors in the pre-cardiac mesoderm to specify lineage commitment of cardiomyocyte development. The polypeptide is Transmembrane protein 88 (TMEM88) (Homo sapiens (Human)).